We begin with the raw amino-acid sequence, 136 residues long: Transcription antitermination protein NusB (136 aa).

The protein belongs to the NusB family.

Functionally, involved in transcription antitermination. Required for transcription of ribosomal RNA (rRNA) genes. Binds specifically to the boxA antiterminator sequence of the ribosomal RNA (rrn) operons. The polypeptide is Transcription antitermination protein NusB (Salinispora tropica (strain ATCC BAA-916 / DSM 44818 / JCM 13857 / NBRC 105044 / CNB-440)).